A 501-amino-acid chain; its full sequence is Ribose import ATP-binding protein RbsA (501 aa).

2 ABC transporter domains span residues 6–242 (LQLS…VGRK) and 253–495 (VHGQ…VGKK). 38 to 45 (GENGAGKS) serves as a coordination point for ATP.

This sequence belongs to the ABC transporter superfamily. Ribose importer (TC 3.A.1.2.1) family. The complex is composed of an ATP-binding protein (RbsA), two transmembrane proteins (RbsC) and a solute-binding protein (RbsB).

It localises to the cell inner membrane. The enzyme catalyses D-ribose(out) + ATP + H2O = D-ribose(in) + ADP + phosphate + H(+). Functionally, part of the ABC transporter complex RbsABC involved in ribose import. Responsible for energy coupling to the transport system. This is Ribose import ATP-binding protein RbsA from Vibrio vulnificus (strain YJ016).